Here is a 466-residue protein sequence, read N- to C-terminus: Asparagine--tRNA ligase (466 aa).

This sequence belongs to the class-II aminoacyl-tRNA synthetase family. In terms of assembly, homodimer.

It localises to the cytoplasm. It catalyses the reaction tRNA(Asn) + L-asparagine + ATP = L-asparaginyl-tRNA(Asn) + AMP + diphosphate + H(+). This chain is Asparagine--tRNA ligase, found in Xylella fastidiosa (strain 9a5c).